A 572-amino-acid polypeptide reads, in one-letter code: Proline--tRNA ligase (572 aa).

This sequence belongs to the class-II aminoacyl-tRNA synthetase family. ProS type 1 subfamily. As to quaternary structure, homodimer.

Its subcellular location is the cytoplasm. The catalysed reaction is tRNA(Pro) + L-proline + ATP = L-prolyl-tRNA(Pro) + AMP + diphosphate. In terms of biological role, catalyzes the attachment of proline to tRNA(Pro) in a two-step reaction: proline is first activated by ATP to form Pro-AMP and then transferred to the acceptor end of tRNA(Pro). As ProRS can inadvertently accommodate and process non-cognate amino acids such as alanine and cysteine, to avoid such errors it has two additional distinct editing activities against alanine. One activity is designated as 'pretransfer' editing and involves the tRNA(Pro)-independent hydrolysis of activated Ala-AMP. The other activity is designated 'posttransfer' editing and involves deacylation of mischarged Ala-tRNA(Pro). The misacylated Cys-tRNA(Pro) is not edited by ProRS. This chain is Proline--tRNA ligase, found in Cronobacter sakazakii (strain ATCC BAA-894) (Enterobacter sakazakii).